Reading from the N-terminus, the 4367-residue chain is Dynein heavy chain, cytoplasmic (4367 aa).

A compositionally biased stretch (pro residues) spans 1 to 13 (MMDSVPSPPPQPS). Residues 1 to 20 (MMDSVPSPPPQPSPDANGVA) are disordered. A stem region spans residues 1 to 1904 (MMDSVPSPPP…HIKMANAKLN (1904 aa)). 5 coiled-coil regions span residues 676 to 693 (ARQIERQLDQYMKKVEQV), 1176 to 1215 (IKFASRLGNRMREVYAELEKARKDLEGQAMTANSTAEAVR), 1327 to 1351 (LTHFEQRITKLQEESAMVAKAKEAL), 1557 to 1574 (YKEFEEEASSWEEKLNRV), and 1637 to 1668 (NIPNVQKSLERLAELLNKIQKALGEYLEKERV). AAA regions lie at residues 1905–2130 (YGFE…VLVS), 2202–2460 (EAIR…FTVA), 2566–2815 (EVNT…WVRG), and 2909–3179 (TFCE…QGKI). An ATP-binding site is contributed by 1943 to 1950 (GPAGTGKT). The stretch at 2195–2218 (ASLEKLQEAIRRLAAERQLVVNDI) forms a coiled coil. ATP contacts are provided by residues 2240–2247 (GNSGSGKS), 2605–2612 (GPPGSGKT), and 2947–2954 (GVSGSGKT). Coiled coils occupy residues 3193-3296 (QYVK…LARA), 3423-3481 (PLRE…SRVQ), and 3778-3809 (VIETLETLKTEAAEISAKMSNTEGVMAEVEQI). The stalk stretch occupies residues 3193-3481 (QYVKLYNEKR…AIKAEMSRVQ (289 aa)). AAA stretches follow at residues 3565-3794 (LSTA…EISA) and 4003-4215 (AERF…VIDT).

It belongs to the dynein heavy chain family. As to quaternary structure, consists of at least two heavy chains and a number of intermediate and light chains.

It is found in the cytoplasm. Its subcellular location is the cytoskeleton. Cytoplasmic dynein acts as a motor for the intracellular retrograde motility of vesicles and organelles along microtubules. Dynein has ATPase activity; the force-producing power stroke is thought to occur on release of ADP. Required to maintain uniform nuclear distribution in hyphae. In Neurospora crassa (strain ATCC 24698 / 74-OR23-1A / CBS 708.71 / DSM 1257 / FGSC 987), this protein is Dynein heavy chain, cytoplasmic (ro-1).